The sequence spans 245 residues: MSMLCYTLIIAFLIGIWAAPKSEDNVPLGSPATSDLSDTSCAQTHEGLKTSRNTDQRHPAPKKAEDQELGSAANIIVDPKLFQKRRFQSSRVLFSTQPPPLSRDEQSVEFLDNEDALNRNIRAKRETHPVHNRGEHSVCDSISVWVANKTNATDIKGNMVTVMVDVNLNNEVYMQYFFETKCRNPNPNPVPSGCRGIDSRHWNSYCTTTQAYVRALTMEGNRASWRFIRIDTACVCVIIRKTDNF.

An N-terminal signal peptide occupies residues 1 to 18 (MSMLCYTLIIAFLIGIWA). The propeptide occupies 19–125 (APKSEDNVPL…ALNRNIRAKR (107 aa)). Residues 47–66 (GLKTSRNTDQRHPAPKKAED) are compositionally biased toward basic and acidic residues. The tract at residues 47 to 69 (GLKTSRNTDQRHPAPKKAEDQEL) is disordered. Intrachain disulfides connect Cys139-Cys206, Cys182-Cys234, and Cys194-Cys236. N-linked (GlcNAc...) asparagine glycosylation is found at Asn148 and Asn151.

The protein belongs to the NGF-beta family. As to quaternary structure, homodimer; non-covalently linked. In terms of tissue distribution, expressed by the venom gland.

The protein resides in the secreted. Functionally, nerve growth factor is important for the development and maintenance of the sympathetic and sensory nervous systems. It stimulates division and differentiation of sympathetic and embryonic sensory neurons as well as basal forebrain cholinergic neurons in the brain. Its relevance in the snake venom is not clear. However, it has been shown to inhibit metalloproteinase-dependent proteolysis of platelet glycoprotein Ib alpha, suggesting a metalloproteinase inhibition to prevent metalloprotease autodigestion and/or protection against prey proteases. Binds a lipid between the two protein chains in the homodimer. The lipid-bound form promotes histamine relase from mouse mast cells, contrary to the lipid-free form. This chain is Venom nerve growth factor 1, found in Tropidechis carinatus (Australian rough-scaled snake).